A 640-amino-acid chain; its full sequence is Guanylate-binding protein 4 (640 aa).

The GTPase domain (Globular) stretch occupies residues 1-325 (MGERTLHAAV…DAINSGAVPC (325 aa)). One can recognise a GB1/RHD3-type G domain in the interval 50 to 292 (SQPVVVVAIV…FCSYIFTHAK (243 aa)). Residues 60–67 (GLYRTGKS), 82–84 (LGS), and 112–116 (DTEGL) each bind GTP. Residues 499 to 612 (GEKAIAAERA…EQLRLLKILD (114 aa)) are a coiled coil.

Belongs to the TRAFAC class dynamin-like GTPase superfamily. GB1/RHD3 GTPase family. GB1 subfamily. Heterodimer with other family members, including GBP1, GBP2 and GBP5. Dimerization regulates subcellular location. Interacts with IRF7; preventing interaction between TRAF6 and IRF7, resulting in impaired TRAF6-mediated IRF7 ubiquitination. (Microbial infection) Ubiquitinated by S.flexneri IpaH9.8, leading to its degradation by the proteasome, thereby preventing its ability to promote host defense against bacterial infection.

It localises to the golgi apparatus membrane. The protein localises to the cytoplasm. It is found in the nucleus. Its subcellular location is the perinuclear region. The catalysed reaction is GTP + H2O = GDP + phosphate + H(+). Its function is as follows. Interferon (IFN)-inducible GTPase that plays important roles in innate immunity against a diverse range of bacterial, viral and protozoan pathogens. Negatively regulates the antiviral response by inhibiting activation of IRF7 transcription factor. The polypeptide is Guanylate-binding protein 4 (Homo sapiens (Human)).